We begin with the raw amino-acid sequence, 726 residues long: Catalase-peroxidase (726 aa).

Positions 98-226 (WHSAGTYRMQ…LAAVHMGLIY (129 aa)) form a cross-link, tryptophyl-tyrosyl-methioninium (Trp-Tyr) (with M-252). H99 (proton acceptor) is an active-site residue. The tryptophyl-tyrosyl-methioninium (Tyr-Met) (with W-98) cross-link spans 226-252 (YVNPEGVNGQPDPARTAQHVRETFARM). H267 provides a ligand contact to heme b.

The protein belongs to the peroxidase family. Peroxidase/catalase subfamily. In terms of assembly, homodimer or homotetramer. It depends on heme b as a cofactor. Post-translationally, formation of the three residue Trp-Tyr-Met cross-link is important for the catalase, but not the peroxidase activity of the enzyme.

The enzyme catalyses H2O2 + AH2 = A + 2 H2O. The catalysed reaction is 2 H2O2 = O2 + 2 H2O. Its function is as follows. Bifunctional enzyme with both catalase and broad-spectrum peroxidase activity. This chain is Catalase-peroxidase, found in Roseobacter denitrificans (strain ATCC 33942 / OCh 114) (Erythrobacter sp. (strain OCh 114)).